The following is a 190-amino-acid chain: NADH-quinone oxidoreductase subunit B (190 aa).

[4Fe-4S] cluster is bound by residues Cys-69, Cys-70, Cys-134, and Cys-164.

It belongs to the complex I 20 kDa subunit family. NDH-1 is composed of 14 different subunits. Subunits NuoB, C, D, E, F, and G constitute the peripheral sector of the complex. Requires [4Fe-4S] cluster as cofactor.

It localises to the cell inner membrane. It catalyses the reaction a quinone + NADH + 5 H(+)(in) = a quinol + NAD(+) + 4 H(+)(out). Functionally, NDH-1 shuttles electrons from NADH, via FMN and iron-sulfur (Fe-S) centers, to quinones in the respiratory chain. Couples the redox reaction to proton translocation (for every two electrons transferred, four hydrogen ions are translocated across the cytoplasmic membrane), and thus conserves the redox energy in a proton gradient. The chain is NADH-quinone oxidoreductase subunit B from Chelativorans sp. (strain BNC1).